We begin with the raw amino-acid sequence, 754 residues long: 5-methyltetrahydropteroyltriglutamate--homocysteine methyltransferase (754 aa).

5-methyltetrahydropteroyltri-L-glutamate is bound by residues 15–18 (RELK) and Lys-114. L-homocysteine-binding positions include 430–432 (IGS) and Glu-483. L-methionine-binding positions include 430-432 (IGS) and Glu-483. 5-methyltetrahydropteroyltri-L-glutamate is bound by residues 514–515 (RC) and Trp-560. Asp-598 contributes to the L-homocysteine binding site. Asp-598 serves as a coordination point for L-methionine. Glu-604 serves as a coordination point for 5-methyltetrahydropteroyltri-L-glutamate. His-641, Cys-643, and Glu-665 together coordinate Zn(2+). The active-site Proton donor is the His-694. Cys-726 lines the Zn(2+) pocket.

Belongs to the vitamin-B12 independent methionine synthase family. Zn(2+) serves as cofactor.

The catalysed reaction is 5-methyltetrahydropteroyltri-L-glutamate + L-homocysteine = tetrahydropteroyltri-L-glutamate + L-methionine. It participates in amino-acid biosynthesis; L-methionine biosynthesis via de novo pathway; L-methionine from L-homocysteine (MetE route): step 1/1. In terms of biological role, catalyzes the transfer of a methyl group from 5-methyltetrahydrofolate to homocysteine resulting in methionine formation. The polypeptide is 5-methyltetrahydropteroyltriglutamate--homocysteine methyltransferase (Campylobacter jejuni subsp. jejuni serotype O:2 (strain ATCC 700819 / NCTC 11168)).